The sequence spans 323 residues: MAGTPDASMEEILWRSPPHVQMMGGYLHSNNILFYFAESPFFDPTSNNASLAIQANYNEAFRHFVETREAFEGRLKTMQGLEFVVSYDPIQAAAQPDGRFAHEPSNIWVIRKQNRRKRTGLDDEVAVLSTYFIVGDCIYMAPSVASVVGNRILSAVTSLTSLLKTASTLPTFTPSHGHTYMPPALKQADASQPGTQSQQSKENTPLPDADAAGKASLVGSSQMVGAGSSLQDTRTLAESFNLLRRYGDEFMDEHPLVGEPGSFILSRVNDTDRTSAAKPPATAAKVGTPQVRVDTPGKVSEKGATPSGSEENKMRKKKTKVGS.

Disordered stretches follow at residues 172-213 (FTPS…DAAG) and 271-323 (TDRT…KVGS). Over residues 189-203 (DASQPGTQSQQSKEN) the composition is skewed to polar residues. Positions 276–285 (AAKPPATAAK) are enriched in low complexity. Over residues 314-323 (MRKKKTKVGS) the composition is skewed to basic residues.

The protein belongs to the Mediator complex subunit 6 family. Component of the Mediator complex.

It localises to the nucleus. In terms of biological role, component of the Mediator complex, a coactivator involved in the regulated transcription of nearly all RNA polymerase II-dependent genes. Mediator functions as a bridge to convey information from gene-specific regulatory proteins to the basal RNA polymerase II transcription machinery. Mediator is recruited to promoters by direct interactions with regulatory proteins and serves as a scaffold for the assembly of a functional preinitiation complex with RNA polymerase II and the general transcription factors. The sequence is that of Mediator of RNA polymerase II transcription subunit 6 (med6) from Aspergillus niger (strain ATCC MYA-4892 / CBS 513.88 / FGSC A1513).